A 266-amino-acid chain; its full sequence is Methylsterol monooxygenase 2-2 (266 aa).

Transmembrane regions (helical) follow at residues 24-44 (IGSF…FIFL), 71-91 (RLLL…YPVF), and 107-127 (EVSA…YWGH). Residues 113-247 (LFYFIIEDFV…FVYMDWIFGT (135 aa)) enclose the Fatty acid hydroxylase domain. Residues 127–131 (HRILH) carry the Histidine box-1 motif. The Histidine box-2 signature appears at 140–144 (HSVHH). The chain crosses the membrane as a helical span at residues 162–182 (ILFLGFATIVGPALTGPHLIT). The short motif at 219 to 225 (FHDYHHR) is the Histidine box-3 element.

The protein belongs to the sterol desaturase family. Fe cation is required as a cofactor. Expressed in shoots, roots, siliques and flowers, and, slightly, in developing seeds.

The protein localises to the endoplasmic reticulum membrane. It catalyses the reaction 4,4-dimethyl-5alpha-cholest-7-en-3beta-ol + 6 Fe(II)-[cytochrome b5] + 3 O2 + 5 H(+) = 4alpha-carboxy-4beta-methyl-5alpha-cholest-7-ene-3beta-ol + 6 Fe(III)-[cytochrome b5] + 4 H2O. The enzyme catalyses 24-methylidenelophenol + 6 Fe(II)-[cytochrome b5] + 3 O2 + 5 H(+) = 4alpha-carboxy-ergosta-7,24(24(1))-dien-3beta-ol + 6 Fe(III)-[cytochrome b5] + 4 H2O. In terms of biological role, non-heme iron oxygenase involved in sterols biosynthesis by catalyzing the removal of the second methyl group at the C-4 position. 24-ethylidenelophenol and 24-ethyllophenol are the preferred substrates. Together with SMO2-1, required during embryogenesis, probably by maintaining sterols and auxin homeostasis. The sequence is that of Methylsterol monooxygenase 2-2 from Arabidopsis thaliana (Mouse-ear cress).